We begin with the raw amino-acid sequence, 106 residues long: uncharacterized protein (106 aa).

This is an uncharacterized protein from Sinorhizobium fredii (strain NBRC 101917 / NGR234).